The primary structure comprises 157 residues: Protein-export protein SecB (157 aa).

The protein belongs to the SecB family. As to quaternary structure, homotetramer, a dimer of dimers. One homotetramer interacts with 1 SecA dimer.

It is found in the cytoplasm. Its function is as follows. One of the proteins required for the normal export of preproteins out of the cell cytoplasm. It is a molecular chaperone that binds to a subset of precursor proteins, maintaining them in a translocation-competent state. It also specifically binds to its receptor SecA. The sequence is that of Protein-export protein SecB from Photobacterium profundum (strain SS9).